Reading from the N-terminus, the 750-residue chain is MIMETESPLSITSPSPSDSTFQVDMEKTMHALPSSLLDSPLLSTNEHYPPKSTLLLSGPSPIRNIQLSATKSSESNSIDYLTDTQNIFPNFVNNENNYQFSTAPLNPIDACRVGERKVFTTGNVLLSADRQPLSTWQQNISVLSESPPQNGIQSYISSSEQAAQALTRKPSVTGFRSSSLNSNSDDIDIFSHASRYLFVTNLPRIVPYATLLELFSKLGDVKGIDTSSLSTDGICIVAFFDIRQAIQAAKSLRSQRFFNDRLLYFQFCQRSSIQKMINQGATIQFLDDNEGQLLLNMQGGSVLSILQLQSILQTFGPLLIMKPLRSQNVSQIICEFYDTRDASFALDELDGRIIHNCCLQVAYYDAMADSVSTSSASSLSVPRGFSGMLNNNSEWNNSMTMSSNQETPTAASCAVSRIGSSYGMSNNFGSVPLGRTESSPAWGTSGYYDVSSTSPVAPSDRNPSRQYNSIRYGLDVNPIAPPNSSRLKQRNSDLLNGINPQWSPFSSNTGKVFDSPTGSLGMRRSLTVGANASCSNPTNLSFASLTLHDSKADSTLSASSLNPDLNLQRYTPTVEKHASDRNSVDYAQIASGIDTRTTVMIKNIPNKFTQQMLRDYIDVTNKGTYDFLYLRIDFVNKCNVGYAFINFIEPQSIITFGKARVGTQWNVFHSEKICDISYANIQGKDRLIEKFRNSCVMDENPAYRPKIFVSHGPNRGMEEPFPAPNNARRKLRSIASAQQIGLFPPTASKC.

Residues Met1 to Thr20 form a disordered region. A compositionally biased stretch (polar residues) spans Ser7 to Thr20. 2 RRM domains span residues Arg195–Arg270 and Leu293–Val361.

As to quaternary structure, binds rad24 when phosphorylated. Inactivated by phosphorylation by ran1/pat1.

In terms of biological role, crucial for commitment to meiosis but it is not sufficient itself for the commitment. May be a splicing regulator. The chain is Meiosis protein mei2 (mei2) from Schizosaccharomyces pombe (strain 972 / ATCC 24843) (Fission yeast).